The primary structure comprises 371 residues: Ligninase LG2 (371 aa).

Positions 1 to 21 (MAFKQLFAAITVALSLTAANA) are cleaved as a signal peptide. Positions 22–28 (AVVKEKR) are excised as a propeptide. Intrachain disulfides connect Cys31-Cys43, Cys42-Cys313, Cys62-Cys148, and Cys277-Cys345. His75 functions as the Proton acceptor in the catalytic mechanism. Ca(2+)-binding residues include Asp76, Gly94, Asp96, and Ser98. Residue Trp199 is modified to 3-hydroxytryptophan. His204 contributes to the heme b binding site. Ca(2+)-binding residues include Ser205, Asp222, Thr224, Ile227, and Asp229. Asn285 carries an N-linked (GlcNAc...) asparagine glycan.

Belongs to the peroxidase family. Ligninase subfamily. The cofactor is Ca(2+). It depends on heme b as a cofactor.

It carries out the reaction 1-(3,4-dimethoxyphenyl)-2-(2-methoxyphenoxy)propane-1,3-diol + H2O2 = 3,4-dimethoxybenzaldehyde + guaiacol + glycolaldehyde + H2O. It catalyses the reaction 2 (3,4-dimethoxyphenyl)methanol + H2O2 = 2 (3,4-dimethoxyphenyl)methanol radical + 2 H2O. The protein operates within secondary metabolite metabolism; lignin degradation. Depolymerization of lignin. Catalyzes the C(alpha)-C(beta) cleavage of the propyl side chains of lignin. This is Ligninase LG2 (GLG2) from Phanerodontia chrysosporium (White-rot fungus).